Reading from the N-terminus, the 203-residue chain is V-type ATP synthase subunit D (203 aa).

Belongs to the V-ATPase D subunit family.

Functionally, produces ATP from ADP in the presence of a proton gradient across the membrane. The polypeptide is V-type ATP synthase subunit D (atpD) (Chlamydia muridarum (strain MoPn / Nigg)).